A 284-amino-acid chain; its full sequence is PTPSPEARVASRPFLDSPLPGSPRSGSPTGYITATKAISAGKLEHVAEKFSNFYNEIELEKQQRRMADAARFQMLTDSIAKLEKSLEAEIKRRAESDKQIQVHFESEVKGLQERTALQLADLQAAFKTSVDGLSRTMQDLHTIIKEEREQRRSDIEHLAGSLVNKVNECVAALDEERISRMDAESKILKQIATDVFRVQEKIDTEKGTREAELATLRSEIHEVLGNRNLSDEKFQTLVLDEINNLKSAVQMEREERISEDDEIVQAVNDYTRALQDGLRIVNNS.

A disordered region spans residues 1–30 (PTPSPEARVASRPFLDSPLPGSPRSGSPTG). The tract at residues 1 to 38 (PTPSPEARVASRPFLDSPLPGSPRSGSPTGYITATKAI) is nonhelical region. Residues 17 to 30 (SPLPGSPRSGSPTG) show a composition bias toward low complexity. Residues 39 to 284 (SAGKLEHVAE…QDGLRIVNNS (246 aa)) are rod. Coiled-coil stretches lie at residues 56–102 (EIEL…QIQV) and 239–268 (LDEI…QAVN).

It belongs to the SF-assemblin family. Post-translationally, consists of at least four isoforms including two phosphorylated.

It localises to the cytoplasm. The protein localises to the cytoskeleton. In terms of biological role, major component of the striated microtubule-associated fibers (SMAFs; system-I-fibers). This is SF-assemblin from Spermatozopsis similis (Green alga).